A 445-amino-acid polypeptide reads, in one-letter code: uncharacterized protein (445 aa).

8 consecutive transmembrane segments (helical) span residues 16–36 (IVSL…AFLI), 52–72 (LLAS…GYLL), 98–118 (VHSL…AGGC), 168–188 (GLMF…LGIV), 219–239 (ASAL…VWLI), 243–263 (GWSV…GALG), 283–303 (LIAA…NEGS), and 366–386 (AAYP…VPLV). Positions 417-445 (AWPNGPRRPGPPGQPRRVRQGGTAITPPT) are disordered.

It belongs to the major facilitator superfamily.

Its subcellular location is the cell membrane. This is an uncharacterized protein from Mycobacterium tuberculosis (strain CDC 1551 / Oshkosh).